The chain runs to 450 residues: 3-phosphoshikimate 1-carboxyvinyltransferase (450 aa).

3 residues coordinate 3-phosphoshikimate: Lys23, Ser24, and Arg28. Residue Lys23 coordinates phosphoenolpyruvate. Residues Gly96 and Arg124 each coordinate phosphoenolpyruvate. 3-phosphoshikimate contacts are provided by Ser167, Ser168, Gln169, Ser196, Glu311, and His340. Gln169 lines the phosphoenolpyruvate pocket. The active-site Proton acceptor is the Glu311. Residues Arg344, Arg385, and Lys410 each coordinate phosphoenolpyruvate. The tract at residues 426-450 (GQGWGYPQPRSGQRARRATGQGSGG) is disordered.

It belongs to the EPSP synthase family. In terms of assembly, monomer.

It localises to the cytoplasm. The catalysed reaction is 3-phosphoshikimate + phosphoenolpyruvate = 5-O-(1-carboxyvinyl)-3-phosphoshikimate + phosphate. It functions in the pathway metabolic intermediate biosynthesis; chorismate biosynthesis; chorismate from D-erythrose 4-phosphate and phosphoenolpyruvate: step 6/7. In terms of biological role, catalyzes the transfer of the enolpyruvyl moiety of phosphoenolpyruvate (PEP) to the 5-hydroxyl of shikimate-3-phosphate (S3P) to produce enolpyruvyl shikimate-3-phosphate and inorganic phosphate. The protein is 3-phosphoshikimate 1-carboxyvinyltransferase of Mycobacterium bovis (strain ATCC BAA-935 / AF2122/97).